We begin with the raw amino-acid sequence, 77 residues long: U8-lycotoxin-Ls1v (77 aa).

The N-terminal stretch at 1 to 20 (MKLIIFTGLVLFGIVSLIEA) is a signal peptide. Residues 21–26 (QAENEK) constitute a propeptide that is removed on maturation.

This sequence belongs to the neurotoxin 19 (CSTX) family. 08 (U8-Lctx) subfamily. Post-translationally, contains 4 disulfide bonds. In terms of tissue distribution, expressed by the venom gland.

It is found in the secreted. The chain is U8-lycotoxin-Ls1v from Lycosa singoriensis (Wolf spider).